The primary structure comprises 653 residues: DNA mismatch repair protein MutL (653 aa).

A disordered region spans residues glutamate 368–valine 413. Residues proline 375 to serine 408 show a composition bias toward basic and acidic residues.

This sequence belongs to the DNA mismatch repair MutL/HexB family.

Its function is as follows. This protein is involved in the repair of mismatches in DNA. It is required for dam-dependent methyl-directed DNA mismatch repair. May act as a 'molecular matchmaker', a protein that promotes the formation of a stable complex between two or more DNA-binding proteins in an ATP-dependent manner without itself being part of a final effector complex. This is DNA mismatch repair protein MutL from Lactobacillus delbrueckii subsp. bulgaricus (strain ATCC 11842 / DSM 20081 / BCRC 10696 / JCM 1002 / NBRC 13953 / NCIMB 11778 / NCTC 12712 / WDCM 00102 / Lb 14).